We begin with the raw amino-acid sequence, 1735 residues long: Cadherin-AgCad1 (1735 aa).

Residues 1-30 (MKCVASKFNMWLHLGWLLGLLLVLLPLVRC) form the signal peptide. At 31-1574 (QGWGEPRFET…ALTEADETLQ (1544 aa)) the chain is on the extracellular side. Positions 166-1456 (VTDCLFNVYH…KVYIVSESNR (1291 aa)) are extracellular domain (EC). 11 Cadherin domains span residues 171 to 273 (FNVY…PPIF), 280 to 378 (ERIM…IPEI), 379 to 498 (YMKP…VPKF), 499 to 620 (GRDE…PPQI), 621 to 757 (TLPR…APYF), 767 to 866 (SVKE…QPYH), 879 to 983 (EKIP…TPKL), 985 to 1109 (ELAA…TPSI), 1136 to 1235 (GSPL…EPTF), 1255 to 1350 (AEDP…PPVF), and 1351 to 1461 (QQRL…TFVF). 2 consecutive short sequence motifs (toxin-binding receptor motif) follow at residues 1344 to 1350 (NDNPPVF) and 1446 to 1456 (AKVYIVSESNR). The interval 1358–1569 (GITTNDRVPK…PLATEALTEA (212 aa)) is CR11-MPED, increases toxicity of activated Cry4B toxin, peptide alone is not toxic. The membrane-proximal EC domain (MPED) stretch occupies residues 1457–1569 (VTFVFLNSVE…PLATEALTEA (113 aa)). A helical transmembrane segment spans residues 1575 to 1595 (IILIVVSAALAVLCVILFVAF). The Cytoplasmic segment spans residues 1596–1735 (FIKIRSLNRQ…ETDDELSHRF (140 aa)). A compositionally biased stretch (polar residues) spans 1701 to 1719 (SLNPMANGTDKSNDGAPTS). The tract at residues 1701-1735 (SLNPMANGTDKSNDGAPTSNHKKLDETDDELSHRF) is disordered. Residues 1722–1735 (KKLDETDDELSHRF) are compositionally biased toward basic and acidic residues.

In terms of tissue distribution, larval midgut (at protein level).

It is found in the apical cell membrane. It localises to the cell projection. The protein resides in the microvillus membrane. Cadherins are calcium-dependent cell adhesion proteins. They preferentially interact with themselves in a homophilic manner in connecting cells. Its function is as follows. (Microbial infection) Binds to and is probably the functional receptor for B.thuringiensis subsp. israelensis (Bti) insecticidal toxin Cry4B. Trichoplusia ni insect cells stably transfected with this protein become suspectible to Cry4B; cells undergo oncosis, they bleb and ruffle after 20-40 minutes, swell after 40-60 minutes and lyse after 90 minutes. Following toxin treatment in the T.in insect system levels of intracellular 3',5'-cyclic AMP (cAMP) rise 12.5-fold; EDTA but not EGTA pretreatment prevents cAMP increase. Inorganic phosphate also rises 3.4-fold after toxin treatment. The sequence is that of Cadherin-AgCad1 from Anopheles gambiae (African malaria mosquito).